The following is a 1400-amino-acid chain: DNA topoisomerase 2 (1400 aa).

Residues 1–30 (MSSFESDSASDAESAFSDASSDFTPSSSVK) show a composition bias toward low complexity. Residues 1 to 57 (MSSFESDSASDAESAFSDASSDFTPSSSVKSKGKVPLRDSTNTTAQPSAPATGDASD) are disordered. A compositionally biased stretch (polar residues) spans 39–57 (DSTNTTAQPSAPATGDASD). Residues Asn117, Asn146, 174 to 176 (SSN), and 187 to 194 (GRNGYGAK) each bind ATP. The interval 379–386 (TKKEKGKK) is interaction with DNA. 415 to 417 (QTK) contacts ATP. In terms of domain architecture, Toprim spans 497-613 (CTLILTEGDS…GLLEIPGFLL (117 aa)). Positions 503, 582, and 584 each coordinate Mg(2+). Residues 749 to 1214 (IPSILDGFKP…SAKDLWNSDL (466 aa)) enclose the Topo IIA-type catalytic domain. The active-site O-(5'-phospho-DNA)-tyrosine intermediate is Tyr839. The interval 1019-1028 (KLISSISLSN) is interaction with DNA. The interval 1235 to 1400 (FGPTAKTSTR…NESDEDYMSE (166 aa)) is disordered. A compositionally biased stretch (low complexity) spans 1262-1271 (SSTPKASTPT). Basic residues predominate over residues 1312–1321 (PKRKTPKSKP). Residues 1389-1400 (DGNESDEDYMSE) are compositionally biased toward acidic residues.

Belongs to the type II topoisomerase family. In terms of assembly, homodimer. It depends on Mg(2+) as a cofactor. Mn(2+) serves as cofactor. Ca(2+) is required as a cofactor.

Its subcellular location is the nucleus. The catalysed reaction is ATP-dependent breakage, passage and rejoining of double-stranded DNA.. Its function is as follows. Control of topological states of DNA by transient breakage and subsequent rejoining of DNA strands. Topoisomerase II makes double-strand breaks. This Meyerozyma guilliermondii (strain ATCC 6260 / CBS 566 / DSM 6381 / JCM 1539 / NBRC 10279 / NRRL Y-324) (Yeast) protein is DNA topoisomerase 2 (TOP2).